We begin with the raw amino-acid sequence, 242 residues long: Large ribosomal subunit protein uL1 (242 aa).

It belongs to the universal ribosomal protein uL1 family. As to quaternary structure, part of the 50S ribosomal subunit.

Binds directly to 23S rRNA. The L1 stalk is quite mobile in the ribosome, and is involved in E site tRNA release. Its function is as follows. Protein L1 is also a translational repressor protein, it controls the translation of the L11 operon by binding to its mRNA. The sequence is that of Large ribosomal subunit protein uL1 from Kitasatospora aureofaciens (Streptomyces aureofaciens).